A 339-amino-acid chain; its full sequence is Heat-inducible transcription repressor HrcA (339 aa).

The protein belongs to the HrcA family.

Negative regulator of class I heat shock genes (grpE-dnaK-dnaJ and groELS operons). Prevents heat-shock induction of these operons. This chain is Heat-inducible transcription repressor HrcA, found in Thiobacillus denitrificans (strain ATCC 25259 / T1).